Reading from the N-terminus, the 145-residue chain is NADH-quinone oxidoreductase subunit A (145 aa).

Helical transmembrane passes span 14–34 (FAVF…GAWF), 66–86 (FYLV…LYAW), and 96–116 (VGFV…FYLV).

It belongs to the complex I subunit 3 family. NDH-1 is composed of 13 different subunits. Subunits NuoA, H, J, K, L, M, N constitute the membrane sector of the complex.

It localises to the cell inner membrane. It catalyses the reaction a quinone + NADH + 5 H(+)(in) = a quinol + NAD(+) + 4 H(+)(out). In terms of biological role, NDH-1 shuttles electrons from NADH, via FMN and iron-sulfur (Fe-S) centers, to quinones in the respiratory chain. The immediate electron acceptor for the enzyme in this species is believed to be ubiquinone. Couples the redox reaction to proton translocation (for every two electrons transferred, four hydrogen ions are translocated across the cytoplasmic membrane), and thus conserves the redox energy in a proton gradient. The chain is NADH-quinone oxidoreductase subunit A from Erwinia tasmaniensis (strain DSM 17950 / CFBP 7177 / CIP 109463 / NCPPB 4357 / Et1/99).